Consider the following 664-residue polypeptide: Chaperone protein DnaK (664 aa).

Residue threonine 201 is modified to Phosphothreonine; by autocatalysis. Residues 574–592 (LKEDASTEKIKEASEELSR) show a composition bias toward basic and acidic residues. Residues 574–664 (LKEDASTEKI…DVEIVDKPND (91 aa)) form a disordered region. Low complexity predominate over residues 600 to 617 (AMQSQSASAAPSSAANAQ). The span at 639–649 (GNSTSASSNNE) shows a compositional bias: polar residues.

This sequence belongs to the heat shock protein 70 family.

Acts as a chaperone. This is Chaperone protein DnaK from Chlamydia felis (strain Fe/C-56) (Chlamydophila felis).